The primary structure comprises 138 residues: Small ribosomal subunit protein uS11c (138 aa).

It belongs to the universal ribosomal protein uS11 family. Part of the 30S ribosomal subunit.

It is found in the plastid. The protein resides in the chloroplast. This Morus indica (Mulberry) protein is Small ribosomal subunit protein uS11c.